Consider the following 299-residue polypeptide: Aliphatic sulfonates import ATP-binding protein SsuB (299 aa).

The region spanning 36–257 (LHVQQVIKRY…QHGSAAFAQI (222 aa)) is the ABC transporter domain. An ATP-binding site is contributed by 68–75 (GRSGCGKS).

This sequence belongs to the ABC transporter superfamily. Aliphatic sulfonates importer (TC 3.A.1.17.2) family. The complex is composed of two ATP-binding proteins (SsuB), two transmembrane proteins (SsuC) and a solute-binding protein (SsuA).

The protein resides in the cell inner membrane. It catalyses the reaction ATP + H2O + aliphatic sulfonate-[sulfonate-binding protein]Side 1 = ADP + phosphate + aliphatic sulfonateSide 2 + [sulfonate-binding protein]Side 1.. Functionally, part of the ABC transporter complex SsuABC involved in aliphatic sulfonates import. Responsible for energy coupling to the transport system. This chain is Aliphatic sulfonates import ATP-binding protein SsuB, found in Cupriavidus pinatubonensis (strain JMP 134 / LMG 1197) (Cupriavidus necator (strain JMP 134)).